The sequence spans 455 residues: Epoxide hydrolase 1 (455 aa).

The helical; Signal-anchor for type III membrane protein transmembrane segment at 1 to 21 (MWLELILASVLGFVIYWFVSR) threads the bilayer. Topologically, residues 22–455 (DKEETLPLED…RKFVSLAELQ (434 aa)) are cytoplasmic. Residue D226 is the Nucleophile of the active site. Residue R295 is modified to Dimethylated arginine. Y374 (proton donor) is an active-site residue. The Proton acceptor role is filled by H431. The residue at position 439 (K439) is an N6-acetyllysine.

It belongs to the peptidase S33 family.

It localises to the microsome membrane. The protein resides in the endoplasmic reticulum membrane. It carries out the reaction cis-stilbene oxide + H2O = (1R,2R)-hydrobenzoin. The catalysed reaction is 1-(4-methoxyphenyl)-N-methyl-N-[(3-methyloxetan-3-yl)methyl]methanamine + H2O = 2-{[(4-methoxybenzyl)(methyl)amino]methyl}-2-methylpropane-1,3-diol. The enzyme catalyses 8,9-epoxy-(5Z,11Z,14Z)-eicosatrienoate + H2O = 8,9-dihydroxy-(5Z,11Z,14Z)-eicosatrienoate. It catalyses the reaction 11,12-epoxy-(5Z,8Z,14Z)-eicosatrienoate + H2O = 11,12-dihydroxy-(5Z,8Z,14Z)-eicosatrienoate. It carries out the reaction 2-(5Z,8Z,11Z,14Z-eicosatetraenoyl)-glycerol + H2O = glycerol + (5Z,8Z,11Z,14Z)-eicosatetraenoate + H(+). With respect to regulation, inhibited by 10-hydroxystearamide and methoxy-arachidonyl fluorophosphate. In terms of biological role, biotransformation enzyme that catalyzes the hydrolysis of arene and aliphatic epoxides to less reactive and more water soluble dihydrodiols by the trans addition of water. May play a role in the metabolism of endogenous lipids such as epoxide-containing fatty acids. Metabolizes the abundant endocannabinoid 2-arachidonoylglycerol (2-AG) to free arachidonic acid (AA) and glycerol. Binds 20(S)-hydroxycholesterol (20(S)-OHC). This chain is Epoxide hydrolase 1, found in Mus musculus (Mouse).